The following is a 450-amino-acid chain: 23S rRNA (uracil(1939)-C(5))-methyltransferase RlmD (450 aa).

Positions 12–70 (SKQLSAKLSLSVNQLDHLGAGIAQHQGKVVFIPGALPDETVTVQLTEQKKNYARAKLIK) constitute a TRAM domain. [4Fe-4S] cluster-binding residues include C83, C89, C92, and C171. S-adenosyl-L-methionine-binding residues include Q283, F312, N317, E333, D360, and D380. The Nucleophile role is filled by C406.

Belongs to the class I-like SAM-binding methyltransferase superfamily. RNA M5U methyltransferase family. RlmD subfamily.

The catalysed reaction is uridine(1939) in 23S rRNA + S-adenosyl-L-methionine = 5-methyluridine(1939) in 23S rRNA + S-adenosyl-L-homocysteine + H(+). In terms of biological role, catalyzes the formation of 5-methyl-uridine at position 1939 (m5U1939) in 23S rRNA. This chain is 23S rRNA (uracil(1939)-C(5))-methyltransferase RlmD, found in Shewanella baltica (strain OS195).